Consider the following 521-residue polypeptide: Importin subunit alpha-4 (521 aa).

The segment at 1-29 (MAENPGLENHRIKSFKNKGRDVETMRRHR) is disordered. A2 bears the N-acetylalanine mark. One can recognise an IBB domain in the interval 2–58 (AENPGLENHRIKSFKNKGRDVETMRRHRNEVTVELRKNKRDEHLLKKRNVPQEESLE). The segment covering 18–29 (KGRDVETMRRHR) has biased composition (basic and acidic residues). The Nuclear localization signal motif lies at 43–52 (EHLLKKRNVP). Phosphoserine is present on residues S56 and S60. One copy of the ARM 1; truncated repeat lies at 66–106 (FKAQNVTLEAILQNATSDNPVVQLSAVQAARKLLSSDRNPP). ARM repeat units lie at residues 107-149 (IDDL…TSAQ), 150-194 (TQAV…CRDY), 195-233 (VISLGVVKPLLSFINPSIPITFLRNVTWVIVNLCRNKDP), 234-278 (PPPM…EQIQ), 279-318 (MVIDSGVVPFLVPLLSHQEVKVQTAALRAVGNIVTGTDEQ), 319-360 (TQVV…NQQQ), 361-400 (VQAVIDAGLIPMIIHQLAKGDFGTQKEAAWAISNLTISGR), and 401-443 (KDQV…IMAG). An NLS binding site (major) region spans residues 137–229 (WALTNIASGT…VTWVIVNLCR (93 aa)). Positions 306 to 394 (RAVGNIVTGT…QKEAAWAISN (89 aa)) are NLS binding site (minor). Residues 447 to 485 (STIAEIIEECGGLEKIEVLQQHENEDIYKLAFEIIDQYF) form an ARM 10; atypical repeat. Y484 carries the post-translational modification Phosphotyrosine.

The protein belongs to the importin alpha family. Forms a complex with importin subunit beta-1. Interacts with DDX21. Interacts with NCBP1, NCBP2/CBP20 and NCBP3. Interacts with RCC1. Interacts with ZC3H11A. Detected more or less in all tissues examined (Ehrlich ascites tumor cells, testis, kidney, spleen, liver, heart, lung, thymus, skeletal muscle, cerebellum and brain (without cerebellum)).

The protein localises to the cytoplasm. The protein resides in the nucleus. Functionally, functions in nuclear protein import as an adapter protein for nuclear receptor KPNB1. Binds specifically and directly to substrates containing either a simple or bipartite NLS motif. Docking of the importin/substrate complex to the nuclear pore complex (NPC) is mediated by KPNB1 through binding to nucleoporin FxFG repeats and the complex is subsequently translocated through the pore by an energy requiring, Ran-dependent mechanism. At the nucleoplasmic side of the NPC, Ran binds to importin-beta and the three components separate and importin-alpha and -beta are re-exported from the nucleus to the cytoplasm where GTP hydrolysis releases Ran from importin. The directionality of nuclear import is thought to be conferred by an asymmetric distribution of the GTP- and GDP-bound forms of Ran between the cytoplasm and nucleus. In vitro, mediates the nuclear import of human cytomegalovirus UL84 by recognizing a non-classical NLS. The polypeptide is Importin subunit alpha-4 (Kpna3) (Mus musculus (Mouse)).